Consider the following 253-residue polypeptide: MDRSPLFLIIMGAPGSGKGTQSKLLASQLSLQHISSGDLLRNAVSQNTPLGQEIKSYLDQGKLLPDQLVWKLVHEKLDELQQDTLLRKLSFLSRSENGAILDGFPRTVAQAKLLNEFLCSYFPDYKIILLDISDEEVLNRLTSRYICPSCQGIYNKQQGFSRCPKCLVELTRRSDDTPEVILDRIQTYKQETQPVLDYYAALQRLITIDANAPTQQVFKNILDALPESNYTIHKKSCCDCCDCDCYDGCDCEE.

Residue 15-20 participates in ATP binding; it reads GSGKGT. The NMP stretch occupies residues 35–64; the sequence is SSGDLLRNAVSQNTPLGQEIKSYLDQGKLL. AMP-binding positions include Ser36, Arg41, 62 to 64, 103 to 106, and Gln110; these read KLL and GFPR. The interval 143-176 is LID; the sequence is SRYICPSCQGIYNKQQGFSRCPKCLVELTRRSDD. Arg144 is a binding site for ATP. Positions 147 and 150 each coordinate Zn(2+). Position 153-154 (153-154) interacts with ATP; that stretch reads IY. Residues Cys163 and Cys166 each contribute to the Zn(2+) site. Arg173 and Arg184 together coordinate AMP. Ala212 contributes to the ATP binding site.

It belongs to the adenylate kinase family. In terms of assembly, monomer.

Its subcellular location is the cytoplasm. The enzyme catalyses AMP + ATP = 2 ADP. It participates in purine metabolism; AMP biosynthesis via salvage pathway; AMP from ADP: step 1/1. Its function is as follows. Catalyzes the reversible transfer of the terminal phosphate group between ATP and AMP. Plays an important role in cellular energy homeostasis and in adenine nucleotide metabolism. The protein is Adenylate kinase of Chlamydia muridarum (strain MoPn / Nigg).